Reading from the N-terminus, the 131-residue chain is Profilin-9 (131 aa).

A disulfide bond links C13 and C115. The Involved in PIP2 interaction signature appears at 81-97 (AVTRGKKGAGGITIKKT). T111 bears the Phosphothreonine mark.

This sequence belongs to the profilin family. As to quaternary structure, occurs in many kinds of cells as a complex with monomeric actin in a 1:1 ratio. Phosphorylated by MAP kinases.

Its subcellular location is the cytoplasm. It is found in the cytoskeleton. Its function is as follows. Binds to actin and affects the structure of the cytoskeleton. At high concentrations, profilin prevents the polymerization of actin, whereas it enhances it at low concentrations. In Phleum pratense (Common timothy), this protein is Profilin-9.